We begin with the raw amino-acid sequence, 515 residues long: Maturase K (515 aa).

Belongs to the intron maturase 2 family. MatK subfamily.

It is found in the plastid. The protein localises to the chloroplast. In terms of biological role, usually encoded in the trnK tRNA gene intron. Probably assists in splicing its own and other chloroplast group II introns. The chain is Maturase K from Pinus sibirica (Siberian pine).